Here is a 681-residue protein sequence, read N- to C-terminus: Translation factor GUF1 homolog, chloroplastic (681 aa).

Residues 1–51 (MAMASAMDLSSPPTFFLSGTSTSSPSLRRLSSISVSGFRRHSNRKLQILCQ) constitute a chloroplast transit peptide. In terms of domain architecture, tr-type G spans 84 to 265 (SNIRNFSIIA…AIVQRIPAPL (182 aa)). GTP-binding positions include 93–100 (AHIDHGKS), 158–162 (DTPGH), and 212–215 (NKID).

It belongs to the TRAFAC class translation factor GTPase superfamily. Classic translation factor GTPase family. LepA subfamily.

It localises to the plastid. Its subcellular location is the chloroplast. The catalysed reaction is GTP + H2O = GDP + phosphate + H(+). Promotes chloroplast protein synthesis. May act as a fidelity factor of the translation reaction, by catalyzing a one-codon backward translocation of tRNAs on improperly translocated ribosomes. This is Translation factor GUF1 homolog, chloroplastic from Arabidopsis thaliana (Mouse-ear cress).